Reading from the N-terminus, the 193-residue chain is Sorting nexin-22 (193 aa).

Positions 1 to 21 (MLEVHIPSVGPEAEGPRQSPE) are disordered. Positions 1 to 118 (MLEVHIPSVG…HFPTDPKASN (118 aa)) constitute a PX domain. A 1,2-diacyl-sn-glycero-3-phospho-(1D-myo-inositol-3-phosphate) contacts are provided by Arg43, Ser45, Lys66, and Arg79.

This sequence belongs to the sorting nexin family. As to quaternary structure, (Microbial infection) Interacts with P.falciparum (strain 3D7) CK1. As to expression, expressed in erythrocytes (at protein level).

The protein localises to the cytoplasmic vesicle membrane. In terms of biological role, may be involved in several stages of intracellular trafficking. Interacts with membranes containing phosphatidylinositol 3-phosphate (PtdIns(3P)). The protein is Sorting nexin-22 (SNX22) of Homo sapiens (Human).